We begin with the raw amino-acid sequence, 288 residues long: Orotidine 5'-phosphate decarboxylase (288 aa).

The Proton donor role is filled by K97.

Belongs to the OMP decarboxylase family. Type 2 subfamily.

It catalyses the reaction orotidine 5'-phosphate + H(+) = UMP + CO2. It functions in the pathway pyrimidine metabolism; UMP biosynthesis via de novo pathway; UMP from orotate: step 2/2. The polypeptide is Orotidine 5'-phosphate decarboxylase (Clostridium tetani (strain Massachusetts / E88)).